The chain runs to 359 residues: B-cell differentiation antigen CD72 (359 aa).

Residues 1-95 are Cytoplasmic-facing; that stretch reads MAEAITYADL…LPCRTTCLRY (95 aa). 2 positions are modified to phosphotyrosine; by LYN: Y7 and Y39. The chain crosses the membrane as a helical; Signal-anchor for type II membrane protein span at residues 96-116; that stretch reads LLLGLLLTCLLLGVTAICLGV. At 117-359 the chain is on the extracellular side; that stretch reads RYLQVSQQLQ…CEMTAFRFPD (243 aa). A glycan (N-linked (GlcNAc...) asparagine) is linked at N136. The 121-residue stretch at 232 to 352 folds into the C-type lectin domain; sequence CCPSGWIMHQ…RSSLPYICEM (121 aa). Cystine bridges form between C233–C244, C261–C350, and C325–C342.

As to quaternary structure, homodimer; disulfide-linked. Associates with CD5. Interacts (tyrosine phosphorylated) with PTPN6/SHP-1. In terms of processing, phosphorylated upon engagement of the B-cell receptor, probably by LYN or SYK. Phosphorylation at Tyr-7 is important for interaction with PTPN6/SHP-1. As to expression, pre-B-cells and B-cells but not terminally differentiated plasma cells.

The protein localises to the membrane. Its function is as follows. Co-receptor of B cell receptor (BCR) that plays both positive and negative roles on B-cell functions. Recognizes the Sm/ribonucleoprotein (RNP) self-antigen ligand, and coligation of CD72 and BCR inhibits BCR signaling. Mechanistically, ligand binding leads to the recruitment of PTPN6/SHP-1 to the BCR complex which is inhibitory to BCR signaling. Also acts as a ligand for CD5 and thereby plays a critical role in maintaining regulatory T and B-cell homeostasis. This is B-cell differentiation antigen CD72 (CD72) from Homo sapiens (Human).